The chain runs to 432 residues: Peptidase B (432 aa).

Mn(2+) contacts are provided by Lys196 and Asp201. Lys208 is a catalytic residue. Asp219, Asp278, and Glu280 together coordinate Mn(2+). Arg282 is an active-site residue.

Belongs to the peptidase M17 family. In terms of assembly, homohexamer. It depends on Mn(2+) as a cofactor.

The protein resides in the cytoplasm. It carries out the reaction Release of an N-terminal amino acid, Xaa, from a peptide or arylamide. Xaa is preferably Glu or Asp but may be other amino acids, including Leu, Met, His, Cys and Gln.. Functionally, probably plays an important role in intracellular peptide degradation. This Yersinia pestis bv. Antiqua (strain Antiqua) protein is Peptidase B.